A 249-amino-acid polypeptide reads, in one-letter code: uncharacterized protein (249 aa).

Histidine 10, histidine 12, glutamate 95, histidine 129, histidine 150, and aspartate 198 together coordinate a divalent metal cation.

Belongs to the metallo-dependent hydrolases superfamily. TatD-type hydrolase family. A divalent metal cation serves as cofactor.

This is an uncharacterized protein from Methanocaldococcus jannaschii (strain ATCC 43067 / DSM 2661 / JAL-1 / JCM 10045 / NBRC 100440) (Methanococcus jannaschii).